Consider the following 434-residue polypeptide: Gamma-glutamyl phosphate reductase (434 aa).

This sequence belongs to the gamma-glutamyl phosphate reductase family.

It localises to the cytoplasm. The catalysed reaction is L-glutamate 5-semialdehyde + phosphate + NADP(+) = L-glutamyl 5-phosphate + NADPH + H(+). It functions in the pathway amino-acid biosynthesis; L-proline biosynthesis; L-glutamate 5-semialdehyde from L-glutamate: step 2/2. Its function is as follows. Catalyzes the NADPH-dependent reduction of L-glutamate 5-phosphate into L-glutamate 5-semialdehyde and phosphate. The product spontaneously undergoes cyclization to form 1-pyrroline-5-carboxylate. The sequence is that of Gamma-glutamyl phosphate reductase from Pelotomaculum thermopropionicum (strain DSM 13744 / JCM 10971 / SI).